The primary structure comprises 802 residues: Protein SBE22 (802 aa).

Disordered regions lie at residues 207–230 (SSTI…RSNS) and 323–345 (SGDP…QRHN).

The protein belongs to the SBE2 family.

The protein resides in the cytoplasm. It is found in the golgi apparatus. Functionally, with SBE2, is involved in cell wall integrity and polarity processes like bud growth. This Vanderwaltozyma polyspora (strain ATCC 22028 / DSM 70294 / BCRC 21397 / CBS 2163 / NBRC 10782 / NRRL Y-8283 / UCD 57-17) (Kluyveromyces polysporus) protein is Protein SBE22 (SBE22).